We begin with the raw amino-acid sequence, 317 residues long: Ubiquinone biosynthesis protein COQ9-A, mitochondrial (317 aa).

Residues 1–46 constitute a mitochondrion transit peptide; that stretch reads MAASVTRVLKGAGGRQLLLMVARRRPVLMQPFLLMPRKFWVSSALR. The interval 50–97 is disordered; the sequence is QRQPPFSASSTHAETQGHAEEQYQQKQPPPRYTDQAGEESEGYESEEQ. A compositionally biased stretch (polar residues) spans 53-63; it reads PPFSASSTHAE. Acidic residues predominate over residues 85–96; it reads AGEESEGYESEE. Arg243 serves as a coordination point for a 1,2-diacylglycero-3-phosphoethanolamine.

Belongs to the COQ9 family. In terms of assembly, homodimer. Heterodimer; two heterodimers of COQ7:COQ9 come together on the same side of the lipid pseudo-bilayer and form a curved tetramer with a hydrophobic surface suitable for membrane interaction. These two tetramers assemble into a soluble octamer with a pseudo-bilayer of lipids captured within. Interacts with COQ7; this interaction allows ubiquinone (CoQ) isoprene intermediates presentation to COQ7 and facilitates the COQ7-mediated hydroxylase step.

Its subcellular location is the mitochondrion. It participates in cofactor biosynthesis; ubiquinone biosynthesis. Functionally, membrane-associated protein that warps the membrane surface to access and bind aromatic isoprenes with high specificity, including ubiquinone (CoQ) isoprene intermediates and presents them directly to COQ7, therefore facilitating the COQ7-mediated hydroxylase step. Participates in the biosynthesis of coenzyme Q, also named ubiquinone, an essential lipid-soluble electron transporter for aerobic cellular respiration. The polypeptide is Ubiquinone biosynthesis protein COQ9-A, mitochondrial (coq9-a) (Xenopus laevis (African clawed frog)).